Reading from the N-terminus, the 133-residue chain is Large ribosomal subunit protein uL15 (133 aa).

Residues 1–64 (MGLENLKPAK…QPLQRRLPKI (64 aa)) form a disordered region.

This sequence belongs to the universal ribosomal protein uL15 family. As to quaternary structure, part of the 50S ribosomal subunit.

Its function is as follows. Binds to the 23S rRNA. In Helicobacter pylori (strain J99 / ATCC 700824) (Campylobacter pylori J99), this protein is Large ribosomal subunit protein uL15.